A 236-amino-acid polypeptide reads, in one-letter code: NAD-dependent protein deacetylase (236 aa).

The Deacetylase sirtuin-type domain occupies methionine 1–glycine 236. Positions 18, 22, 29, 30, 96, 98, 99, and 114 each coordinate NAD(+). Residue phenylalanine 29 participates in nicotinamide binding. Nicotinamide-binding residues include valine 98 and aspartate 99. The active-site Proton acceptor is histidine 114. Zn(2+) is bound by residues cysteine 122, cysteine 125, cysteine 141, and cysteine 143. Positions 181, 182, 206, and 225 each coordinate NAD(+).

The protein belongs to the sirtuin family. Class U subfamily. Requires Zn(2+) as cofactor.

The protein resides in the cytoplasm. It carries out the reaction N(6)-acetyl-L-lysyl-[protein] + NAD(+) + H2O = 2''-O-acetyl-ADP-D-ribose + nicotinamide + L-lysyl-[protein]. In terms of biological role, NAD-dependent protein deacetylase which modulates the activities of several enzymes which are inactive in their acetylated form. The polypeptide is NAD-dependent protein deacetylase (Oceanobacillus iheyensis (strain DSM 14371 / CIP 107618 / JCM 11309 / KCTC 3954 / HTE831)).